Consider the following 433-residue polypeptide: ATP-dependent protease ATPase subunit HslU (433 aa).

Residues isoleucine 18, 60–65, aspartate 246, glutamate 311, and arginine 383 contribute to the ATP site; that span reads GVGKTE.

It belongs to the ClpX chaperone family. HslU subfamily. As to quaternary structure, a double ring-shaped homohexamer of HslV is capped on each side by a ring-shaped HslU homohexamer. The assembly of the HslU/HslV complex is dependent on binding of ATP.

The protein resides in the cytoplasm. ATPase subunit of a proteasome-like degradation complex; this subunit has chaperone activity. The binding of ATP and its subsequent hydrolysis by HslU are essential for unfolding of protein substrates subsequently hydrolyzed by HslV. HslU recognizes the N-terminal part of its protein substrates and unfolds these before they are guided to HslV for hydrolysis. This Cereibacter sphaeroides (strain ATCC 17025 / ATH 2.4.3) (Rhodobacter sphaeroides) protein is ATP-dependent protease ATPase subunit HslU.